The following is a 417-amino-acid chain: Pelargonidin 3-O-(6-caffeoylglucoside) 5-O-(6-O-malonylglucoside) 4'''-malonyltransferase (417 aa).

Catalysis depends on proton acceptor residues His147 and Asp360.

The protein belongs to the plant acyltransferase family. Monomer. Expressed at higher level in recently opened, fully pigmented flowers.

It catalyses the reaction 4'''-demalonylsalvianin + malonyl-CoA = salvianin + CoA. It functions in the pathway pigment biosynthesis; anthocyanin biosynthesis. Its activity is regulated as follows. Inhibited by the following metal ions: Cd(2+), Cu(2+), Fe(2+), Hg(2+) and Zn(2+). Activity is strongly inhibited by CoA-SH and partially inhibited by acetyl-CoA, caffeic acid and bisdemalonylsalvianin. Its function is as follows. Catalyzes the transfer of the malonyl group from malonyl-CoA to the 4'''-hydroxyl group of the 5-glucosyl moiety of anthocyanins. Anthocyanins are ubiquitous colored pigments that are responsible for petal color. The polypeptide is Pelargonidin 3-O-(6-caffeoylglucoside) 5-O-(6-O-malonylglucoside) 4'''-malonyltransferase (Salvia splendens (Scarlet sage)).